The primary structure comprises 351 residues: Thiamine-phosphate synthase (351 aa).

The interval 1–129 (MVEPYSQQKQ…GQACKQMRYR (129 aa)) is unknown. The tract at residues 130–351 (VYSLETNLMG…SQLNRIKPES (222 aa)) is thiamine-phosphate synthase. Residues 177–181 (QYRDK) and Asn209 contribute to the 4-amino-2-methyl-5-(diphosphooxymethyl)pyrimidine site. Residues Asp210 and Asp229 each coordinate Mg(2+). Ser248 contributes to the 4-amino-2-methyl-5-(diphosphooxymethyl)pyrimidine binding site. 274-276 (TPT) provides a ligand contact to 2-[(2R,5Z)-2-carboxy-4-methylthiazol-5(2H)-ylidene]ethyl phosphate. Residue Lys277 coordinates 4-amino-2-methyl-5-(diphosphooxymethyl)pyrimidine. Gly304 contributes to the 2-[(2R,5Z)-2-carboxy-4-methylthiazol-5(2H)-ylidene]ethyl phosphate binding site.

Belongs to the thiamine-phosphate synthase family. Requires Mg(2+) as cofactor.

It carries out the reaction 2-[(2R,5Z)-2-carboxy-4-methylthiazol-5(2H)-ylidene]ethyl phosphate + 4-amino-2-methyl-5-(diphosphooxymethyl)pyrimidine + 2 H(+) = thiamine phosphate + CO2 + diphosphate. The enzyme catalyses 2-(2-carboxy-4-methylthiazol-5-yl)ethyl phosphate + 4-amino-2-methyl-5-(diphosphooxymethyl)pyrimidine + 2 H(+) = thiamine phosphate + CO2 + diphosphate. The catalysed reaction is 4-methyl-5-(2-phosphooxyethyl)-thiazole + 4-amino-2-methyl-5-(diphosphooxymethyl)pyrimidine + H(+) = thiamine phosphate + diphosphate. The protein operates within cofactor biosynthesis; thiamine diphosphate biosynthesis; thiamine phosphate from 4-amino-2-methyl-5-diphosphomethylpyrimidine and 4-methyl-5-(2-phosphoethyl)-thiazole: step 1/1. Condenses 4-methyl-5-(beta-hydroxyethyl)thiazole monophosphate (THZ-P) and 2-methyl-4-amino-5-hydroxymethyl pyrimidine pyrophosphate (HMP-PP) to form thiamine monophosphate (TMP). This Nostoc sp. (strain PCC 7120 / SAG 25.82 / UTEX 2576) protein is Thiamine-phosphate synthase.